The following is a 491-amino-acid chain: Probable CtpA-like serine protease (491 aa).

Positions 1–22 (MNDHQKNHATSQDDNTKSTPSK) are disordered. Polar residues predominate over residues 8-22 (HATSQDDNTKSTPSK). A helical membrane pass occupies residues 31 to 51 (LWHFILVILGIILLTSIITVV). The PDZ domain maps to 119 to 201 (TKQFNEGVSG…TYVTLTIKRG (83 aa)). Catalysis depends on charge relay system residues serine 324, aspartate 335, and lysine 349.

Belongs to the peptidase S41A family.

The protein localises to the cell membrane. The polypeptide is Probable CtpA-like serine protease (Staphylococcus epidermidis (strain ATCC 35984 / DSM 28319 / BCRC 17069 / CCUG 31568 / BM 3577 / RP62A)).